Reading from the N-terminus, the 66-residue chain is Large ribosomal subunit protein bL31 (66 aa).

Residues Cys-16, Cys-18, Cys-36, and Cys-39 each contribute to the Zn(2+) site.

It belongs to the bacterial ribosomal protein bL31 family. Type A subfamily. Part of the 50S ribosomal subunit. Zn(2+) serves as cofactor.

Functionally, binds the 23S rRNA. The polypeptide is Large ribosomal subunit protein bL31 (Campylobacter hominis (strain ATCC BAA-381 / DSM 21671 / CCUG 45161 / LMG 19568 / NCTC 13146 / CH001A)).